The sequence spans 84 residues: MKKLFLGLIWVYQRFISPLTPPSCRFYPTCSNYTKEAIEVHGPIKGAWLGIKRISKCHPLHKGGFDPVPLKKDNNHQHCEHHHH.

The protein belongs to the UPF0161 family.

Its subcellular location is the cell membrane. Could be involved in insertion of integral membrane proteins into the membrane. This Staphylococcus carnosus (strain TM300) protein is Putative membrane protein insertion efficiency factor.